Consider the following 56-residue polypeptide: MGHANIWYSHPRKYGQGSRSCRACSNRHGLIRKYGLNICRQCFREYANDIGFKKLD.

Residues Cys-21, Cys-24, Cys-39, and Cys-42 each contribute to the Zn(2+) site.

Belongs to the universal ribosomal protein uS14 family. Component of the 40S small ribosomal subunit. Zn(2+) is required as a cofactor.

Its subcellular location is the cytoplasm. It is found in the cytosol. It localises to the rough endoplasmic reticulum. The sequence is that of Small ribosomal subunit protein uS14 (RpS29) from Plutella xylostella (Diamondback moth).